We begin with the raw amino-acid sequence, 293 residues long: tRNA-cytidine(32) 2-sulfurtransferase (293 aa).

A PP-loop motif motif is present at residues 71 to 76 (SGGKDS). Cysteine 146, cysteine 149, and cysteine 237 together coordinate [4Fe-4S] cluster.

Belongs to the TtcA family. As to quaternary structure, homodimer. Requires Mg(2+) as cofactor. [4Fe-4S] cluster serves as cofactor.

The protein resides in the cytoplasm. It catalyses the reaction cytidine(32) in tRNA + S-sulfanyl-L-cysteinyl-[cysteine desulfurase] + AH2 + ATP = 2-thiocytidine(32) in tRNA + L-cysteinyl-[cysteine desulfurase] + A + AMP + diphosphate + H(+). The protein operates within tRNA modification. Catalyzes the ATP-dependent 2-thiolation of cytidine in position 32 of tRNA, to form 2-thiocytidine (s(2)C32). The sulfur atoms are provided by the cysteine/cysteine desulfurase (IscS) system. This Sinorhizobium medicae (strain WSM419) (Ensifer medicae) protein is tRNA-cytidine(32) 2-sulfurtransferase.